A 174-amino-acid polypeptide reads, in one-letter code: Recombination protein RecR (174 aa).

The C4-type zinc finger occupies Cys30–Cys45. A Toprim domain is found at Gly54–Pro149.

It belongs to the RecR family.

Functionally, may play a role in DNA repair. It seems to be involved in an RecBC-independent recombinational process of DNA repair. It may act with RecF and RecO. In Haemophilus ducreyi (strain 35000HP / ATCC 700724), this protein is Recombination protein RecR.